Here is a 399-residue protein sequence, read N- to C-terminus: Dual-specificity RNA methyltransferase RlmN (399 aa).

Glu-116 functions as the Proton acceptor in the catalytic mechanism. In terms of domain architecture, Radical SAM core spans 122 to 352 (SEDRLTLCIS…VLLRRSMGRD (231 aa)). Cys-129 and Cys-357 form a disulfide bridge. Positions 136, 140, and 143 each coordinate [4Fe-4S] cluster. S-adenosyl-L-methionine-binding positions include 185–186 (GE), Ser-217, 238–240 (SLN), and Asn-314. Cys-357 acts as the S-methylcysteine intermediate in catalysis.

It belongs to the radical SAM superfamily. RlmN family. [4Fe-4S] cluster serves as cofactor.

It is found in the cytoplasm. The enzyme catalyses adenosine(2503) in 23S rRNA + 2 reduced [2Fe-2S]-[ferredoxin] + 2 S-adenosyl-L-methionine = 2-methyladenosine(2503) in 23S rRNA + 5'-deoxyadenosine + L-methionine + 2 oxidized [2Fe-2S]-[ferredoxin] + S-adenosyl-L-homocysteine. It catalyses the reaction adenosine(37) in tRNA + 2 reduced [2Fe-2S]-[ferredoxin] + 2 S-adenosyl-L-methionine = 2-methyladenosine(37) in tRNA + 5'-deoxyadenosine + L-methionine + 2 oxidized [2Fe-2S]-[ferredoxin] + S-adenosyl-L-homocysteine. Functionally, specifically methylates position 2 of adenine 2503 in 23S rRNA and position 2 of adenine 37 in tRNAs. m2A2503 modification seems to play a crucial role in the proofreading step occurring at the peptidyl transferase center and thus would serve to optimize ribosomal fidelity. In Bdellovibrio bacteriovorus (strain ATCC 15356 / DSM 50701 / NCIMB 9529 / HD100), this protein is Dual-specificity RNA methyltransferase RlmN.